We begin with the raw amino-acid sequence, 243 residues long: Small ribosomal subunit protein uS2 (243 aa).

Belongs to the universal ribosomal protein uS2 family.

The polypeptide is Small ribosomal subunit protein uS2 (Chromobacterium violaceum (strain ATCC 12472 / DSM 30191 / JCM 1249 / CCUG 213 / NBRC 12614 / NCIMB 9131 / NCTC 9757 / MK)).